A 220-amino-acid chain; its full sequence is Ribosomal RNA large subunit methyltransferase E (220 aa).

5 residues coordinate S-adenosyl-L-methionine: G64, W66, D84, D100, and D125. The active-site Proton acceptor is the K165.

Belongs to the class I-like SAM-binding methyltransferase superfamily. RNA methyltransferase RlmE family.

It localises to the cytoplasm. It catalyses the reaction uridine(2552) in 23S rRNA + S-adenosyl-L-methionine = 2'-O-methyluridine(2552) in 23S rRNA + S-adenosyl-L-homocysteine + H(+). In terms of biological role, specifically methylates the uridine in position 2552 of 23S rRNA at the 2'-O position of the ribose in the fully assembled 50S ribosomal subunit. This Thiobacillus denitrificans (strain ATCC 25259 / T1) protein is Ribosomal RNA large subunit methyltransferase E.